A 178-amino-acid polypeptide reads, in one-letter code: Large ribosomal subunit protein uL6 (178 aa).

Belongs to the universal ribosomal protein uL6 family. As to quaternary structure, part of the 50S ribosomal subunit.

In terms of biological role, this protein binds to the 23S rRNA, and is important in its secondary structure. It is located near the subunit interface in the base of the L7/L12 stalk, and near the tRNA binding site of the peptidyltransferase center. The protein is Large ribosomal subunit protein uL6 of Francisella tularensis subsp. holarctica (strain FTNF002-00 / FTA).